The sequence spans 239 residues: uncharacterized protein (239 aa).

The next 3 helical transmembrane spans lie at Leu-125–Tyr-144, Ile-149–Leu-171, and Ser-197–Phe-216.

It localises to the cell membrane. This is an uncharacterized protein from Aquifex aeolicus (strain VF5).